The primary structure comprises 138 residues: Small ribosomal subunit protein uS11c (138 aa).

The disordered stretch occupies residues 1-23 (MAKAIPRVGSRKNGRISSRKSAR). Over residues 9 to 23 (GSRKNGRISSRKSAR) the composition is skewed to basic residues.

Belongs to the universal ribosomal protein uS11 family. In terms of assembly, part of the 30S ribosomal subunit.

Its subcellular location is the plastid. The protein resides in the chloroplast. This is Small ribosomal subunit protein uS11c from Coffea arabica (Arabian coffee).